We begin with the raw amino-acid sequence, 139 residues long: Large ribosomal subunit protein uL16 (139 aa).

Belongs to the universal ribosomal protein uL16 family. Part of the 50S ribosomal subunit.

Its function is as follows. Binds 23S rRNA and is also seen to make contacts with the A and possibly P site tRNAs. This chain is Large ribosomal subunit protein uL16, found in Chlorobium chlorochromatii (strain CaD3).